Consider the following 152-residue polypeptide: MSNGIISKFKNWIVDEEEDYIEDEYESGMDDIVQEEEMNSGFSTAKANKIVNLHTTSQMKVVIVEPKVYDEAATIADHLKQRRAVIVNLEGLTNSEVRKSIFNFMNGAVYVLDGSIQKVSKSIFILAPNNVDIDANMKKELESKAFFPWQNK.

The protein belongs to the SepF family. As to quaternary structure, homodimer. Interacts with FtsZ.

It is found in the cytoplasm. Functionally, cell division protein that is part of the divisome complex and is recruited early to the Z-ring. Probably stimulates Z-ring formation, perhaps through the cross-linking of FtsZ protofilaments. Its function overlaps with FtsA. This chain is Cell division protein SepF, found in Clostridioides difficile (strain 630) (Peptoclostridium difficile).